The primary structure comprises 312 residues: MTKTMAEHISVMLNESVDMLVTDTNGLYVDGTFGRGGHTRLVLDRLDKGRLLGFDKDPVAIGHGKLLEQEDARFSIVQDSFANMAEHITNVFGVDRVDGVMMDLGVSSPQIDDAERGFSFMNDGPLDMRMNPDKGQSAAEWIATVSEKDMADVMYQYGEERFSRRIAKAICEYRSHTPILTTLQLSKIIAEANPAWEKGKNPATRAFQGIRIYINNELGDLEIGLEAAAQALKVGGRLAVISFHSLEDRIVKRFMKLQAKGPELPRHLPIRNAHLDIKFKTVGKAIKPSQSEVSENVRSRSAVLRVLERVSD.

S-adenosyl-L-methionine-binding positions include 36-38 (GGH), Asp-55, Phe-81, Asp-103, and Gln-110.

This sequence belongs to the methyltransferase superfamily. RsmH family.

Its subcellular location is the cytoplasm. The enzyme catalyses cytidine(1402) in 16S rRNA + S-adenosyl-L-methionine = N(4)-methylcytidine(1402) in 16S rRNA + S-adenosyl-L-homocysteine + H(+). Specifically methylates the N4 position of cytidine in position 1402 (C1402) of 16S rRNA. The chain is Ribosomal RNA small subunit methyltransferase H from Marinomonas sp. (strain MWYL1).